The following is a 394-amino-acid chain: Elongation factor Tu (394 aa).

A tr-type G domain is found at 10–204; sequence KAHVNIGTIG…SVDSYIPTPT (195 aa). Positions 19-26 are G1; it reads GHIDHGKT. 19–26 serves as a coordination point for GTP; the sequence is GHIDHGKT. Threonine 26 serves as a coordination point for Mg(2+). Residues 60-64 form a G2 region; sequence GITIN. A G3 region spans residues 81-84; that stretch reads DCPG. GTP-binding positions include 81 to 85 and 136 to 139; these read DCPGH and NKCD. The G4 stretch occupies residues 136 to 139; it reads NKCD. Residues 174–176 are G5; that stretch reads SAL.

Belongs to the TRAFAC class translation factor GTPase superfamily. Classic translation factor GTPase family. EF-Tu/EF-1A subfamily. Monomer.

It is found in the cytoplasm. The enzyme catalyses GTP + H2O = GDP + phosphate + H(+). In terms of biological role, GTP hydrolase that promotes the GTP-dependent binding of aminoacyl-tRNA to the A-site of ribosomes during protein biosynthesis. The chain is Elongation factor Tu from Malacoplasma penetrans (strain HF-2) (Mycoplasma penetrans).